A 680-amino-acid chain; its full sequence is NADPH--cytochrome P450 reductase (680 aa).

Residues 1 to 5 (MALDK) are Lumenal-facing. A helical membrane pass occupies residues 6–23 (LDLYVIIVLAVAVAAYFA). At 24–680 (KNQFLDQPQD…VQNRYQEDVW (657 aa)) the chain is on the cytoplasmic side. The Flavodoxin-like domain maps to 60–204 (TLLLFGSQTG…DFLTWKDNVF (145 aa)). FMN is bound by residues 66–71 (SQTGTA), 117–120 (ATYG), 152–161 (LGNSTYEFYN), and D187. One can recognise an FAD-binding FR-type domain in the interval 264–509 (THPYLAKISK…SGPRNKFNKF (246 aa)). Position 283 (R283) interacts with NADP(+). Residues 439-442 (RYYS), 457-459 (TAV), and 473-476 (GVVT) contribute to the FAD site. Residues T537, 599-600 (SR), 606-610 (KVYVQ), and D642 contribute to the NADP(+) site. W680 is a binding site for FAD.

This sequence belongs to the NADPH--cytochrome P450 reductase family. The protein in the N-terminal section; belongs to the flavodoxin family. It in the C-terminal section; belongs to the flavoprotein pyridine nucleotide cytochrome reductase family. FAD serves as cofactor. Requires FMN as cofactor.

It localises to the endoplasmic reticulum membrane. It is found in the mitochondrion outer membrane. Its subcellular location is the cell membrane. The enzyme catalyses 2 oxidized [cytochrome P450] + NADPH = 2 reduced [cytochrome P450] + NADP(+) + H(+). Functionally, this enzyme is required for electron transfer from NADP to cytochrome P450 in microsomes. It can also provide electron transfer to heme oxygenase and cytochrome B5. Involved in ergosterol biosynthesis. In Candida maltosa (Yeast), this protein is NADPH--cytochrome P450 reductase.